The chain runs to 63 residues: Large ribosomal subunit protein bL35 (63 aa).

Residues 1–22 (MPKMKTKSGATKRFKKTATGFK) are disordered.

It belongs to the bacterial ribosomal protein bL35 family.

This Marinobacter nauticus (strain ATCC 700491 / DSM 11845 / VT8) (Marinobacter aquaeolei) protein is Large ribosomal subunit protein bL35.